The chain runs to 213 residues: NADH-quinone oxidoreductase subunit I (213 aa).

4Fe-4S ferredoxin-type domains are found at residues 74–103 (RFIESENERCIGCGLCEKICISNCIRMETS) and 113–142 (ENYSINLGRCIYCGFCAEVCPELAIVHGTE). Positions 83, 86, 89, 93, 122, 125, 128, and 132 each coordinate [4Fe-4S] cluster.

This sequence belongs to the complex I 23 kDa subunit family. As to quaternary structure, NDH-1 is composed of 14 different subunits. Subunits NuoA, H, J, K, L, M, N constitute the membrane sector of the complex. [4Fe-4S] cluster is required as a cofactor.

The protein localises to the cell inner membrane. It catalyses the reaction a quinone + NADH + 5 H(+)(in) = a quinol + NAD(+) + 4 H(+)(out). In terms of biological role, NDH-1 shuttles electrons from NADH, via FMN and iron-sulfur (Fe-S) centers, to quinones in the respiratory chain. The immediate electron acceptor for the enzyme in this species is believed to be ubiquinone. Couples the redox reaction to proton translocation (for every two electrons transferred, four hydrogen ions are translocated across the cytoplasmic membrane), and thus conserves the redox energy in a proton gradient. The sequence is that of NADH-quinone oxidoreductase subunit I from Campylobacter jejuni subsp. jejuni serotype O:23/36 (strain 81-176).